A 199-amino-acid polypeptide reads, in one-letter code: Ribonuclease HII (199 aa).

Residues 10-199 form the RNase H type-2 domain; sequence HLVAGVDEVG…VKRALGLASN (190 aa). A divalent metal cation-binding residues include aspartate 16, glutamate 17, and aspartate 108.

This sequence belongs to the RNase HII family. Mn(2+) serves as cofactor. It depends on Mg(2+) as a cofactor.

The protein localises to the cytoplasm. The enzyme catalyses Endonucleolytic cleavage to 5'-phosphomonoester.. Endonuclease that specifically degrades the RNA of RNA-DNA hybrids. The protein is Ribonuclease HII of Klebsiella pneumoniae (strain 342).